We begin with the raw amino-acid sequence, 41 residues long: Hemoglobin subunit beta (41 aa).

The 41-residue stretch at 1–41 (LGNVLVCVLAHHFGKEFTPQVQAAYQKVVAGVANALAHKYH) folds into the Globin domain. Lys39 carries the post-translational modification N6-acetyllysine.

The protein belongs to the globin family. As to quaternary structure, heterotetramer of two alpha chains and two beta chains. In terms of tissue distribution, red blood cells.

Functionally, involved in oxygen transport from the lung to the various peripheral tissues. The polypeptide is Hemoglobin subunit beta (HBB) (Colobus guereza (Mantled guereza)).